The chain runs to 515 residues: Cytosolic Fe-S cluster assembly factor NAR1 homolog (515 aa).

[4Fe-4S] cluster-binding residues include Cys-19, Cys-65, Cys-68, Cys-71, Cys-192, Cys-247, Cys-428, and Cys-432.

Belongs to the NARF family.

Component of the cytosolic Fe/S protein assembly machinery. Required for maturation of extramitochondrial Fe/S proteins. May play a role in the transfer of pre-assembled Fe/S clusters to target apoproteins. The polypeptide is Cytosolic Fe-S cluster assembly factor NAR1 homolog (Schizosaccharomyces japonicus (strain yFS275 / FY16936) (Fission yeast)).